A 188-amino-acid polypeptide reads, in one-letter code: RWD domain-containing protein 4 (188 aa).

One can recognise an RWD domain in the interval 9–111; it reads MELEALRSIY…EYAKDNKEQF (103 aa). A disordered region spans residues 132 to 167; it reads TPSAAPSSKKKDKKEQLSKAQKRKLADKTDHKGELP. Residues 155 to 166 are compositionally biased toward basic and acidic residues; that stretch reads KLADKTDHKGEL.

The polypeptide is RWD domain-containing protein 4 (Rwdd4) (Rattus norvegicus (Rat)).